Reading from the N-terminus, the 303-residue chain is MKNIIFMGTPSYATCILKELIDKGFNVQALFTQSDKPVGRKQILTPSDTKKFVLENNLNIEIFTPKSLKDENIINEIKILKPDFIVVAAYGKILPKEILDIAPCINLHASLLPKYRGASPIQSAILNGDKISGVCTMLMEEGLDSGAILESTECDIEGKNSAEVFIMFSNLAAKLTISTLLNFEKIIPKKQDESLVIHCKKIKKEDGLITLDNASEIYQKFLAFYPWPGIFFENGMKFLDIELIDSEKTQKSGVILQVEKESFLLSCKKGILKIKTLQESGKKVLDAKTYLNGKRLKLGDSLF.

110–113 (SLLP) is a binding site for (6S)-5,6,7,8-tetrahydrofolate.

It belongs to the Fmt family.

It carries out the reaction L-methionyl-tRNA(fMet) + (6R)-10-formyltetrahydrofolate = N-formyl-L-methionyl-tRNA(fMet) + (6S)-5,6,7,8-tetrahydrofolate + H(+). In terms of biological role, attaches a formyl group to the free amino group of methionyl-tRNA(fMet). The formyl group appears to play a dual role in the initiator identity of N-formylmethionyl-tRNA by promoting its recognition by IF2 and preventing the misappropriation of this tRNA by the elongation apparatus. The chain is Methionyl-tRNA formyltransferase from Campylobacter lari (strain RM2100 / D67 / ATCC BAA-1060).